The following is a 380-amino-acid chain: Homoserine O-succinyltransferase (380 aa).

The 312-residue stretch at 51 to 362 (NAVLICHALS…SKHGHDAFLL (312 aa)) folds into the AB hydrolase-1 domain. Serine 157 acts as the Nucleophile in catalysis. Arginine 227 serves as a coordination point for substrate. Active-site residues include aspartate 324 and histidine 357. Aspartate 358 contributes to the substrate binding site.

The protein belongs to the AB hydrolase superfamily. MetX family. In terms of assembly, homodimer.

Its subcellular location is the cytoplasm. It catalyses the reaction L-homoserine + succinyl-CoA = O-succinyl-L-homoserine + CoA. It functions in the pathway amino-acid biosynthesis; L-methionine biosynthesis via de novo pathway; O-succinyl-L-homoserine from L-homoserine: step 1/1. Functionally, transfers a succinyl group from succinyl-CoA to L-homoserine, forming succinyl-L-homoserine. This Cellvibrio japonicus (strain Ueda107) (Pseudomonas fluorescens subsp. cellulosa) protein is Homoserine O-succinyltransferase.